We begin with the raw amino-acid sequence, 320 residues long: MMQSKPGVLMVNLGTPDAPTSKAIKRYLAEFLSDRRVVDTSPLLWWPLLHGVILPLRSPRVAKLYQSVWMEEGSPLLVYSRRQQKALAARMPDIPVELGMSYGSPNLPEAIEKLLAQGVTNLVILPLYPQYSCSTSAAVWDAVARVLKGYRRLPSISFIRDYAEHPAYISALKQSVERSFAEHGQPDRLVMSFHGIPKRYAQLGDDYPIRCEDTSRALRAALPLPAEKIIMTYQSRFGREPWLTPYTDETLKSLPSQGVKHIQLICPGFSADCLETLEEIKEQNREFFLHAGGEKFEYIPALNDDEGHIALLEQLIRHNI.

Fe cation contacts are provided by His-194 and Glu-275.

The protein belongs to the ferrochelatase family.

The protein resides in the cytoplasm. The catalysed reaction is heme b + 2 H(+) = protoporphyrin IX + Fe(2+). It participates in porphyrin-containing compound metabolism; protoheme biosynthesis; protoheme from protoporphyrin-IX: step 1/1. In terms of biological role, catalyzes the ferrous insertion into protoporphyrin IX. The polypeptide is Ferrochelatase (Yersinia pestis bv. Antiqua (strain Antiqua)).